A 383-amino-acid chain; its full sequence is Pleckstrin homology domain-containing family A member 1 (383 aa).

2 consecutive PH domains span residues 7–112 (QNRI…KAIK) and 191–289 (AVIK…GAIV). V284 is subject to Phosphoserine. The disordered stretch occupies residues 362–383 (LPRSSQGTSRSRLSLQESQLPK). Residues 370-383 (SRSRLSLQESQLPK) are compositionally biased toward low complexity.

In terms of assembly, interacts with MPDZ and PTPN13.

It is found in the cytoplasm. Its subcellular location is the cell membrane. The protein resides in the nucleus. Its function is as follows. Binds specifically to phosphatidylinositol 3,4-diphosphate (PtdIns3,4P2), but not to other phosphoinositides. May recruit other proteins to the plasma membrane. The polypeptide is Pleckstrin homology domain-containing family A member 1 (Plekha1) (Mus musculus (Mouse)).